Consider the following 326-residue polypeptide: Malate dehydrogenase (326 aa).

12 to 18 (GGTGQIA) contributes to the NAD(+) binding site. The substrate site is built by R93 and R99. NAD(+) is bound by residues N106, Q113, and 130–132 (VGN). The substrate site is built by N132 and R163. Catalysis depends on H188, which acts as the Proton acceptor.

The protein belongs to the LDH/MDH superfamily. MDH type 2 family.

It catalyses the reaction (S)-malate + NAD(+) = oxaloacetate + NADH + H(+). Functionally, catalyzes the reversible oxidation of malate to oxaloacetate. The protein is Malate dehydrogenase of Chlamydia trachomatis serovar A (strain ATCC VR-571B / DSM 19440 / HAR-13).